We begin with the raw amino-acid sequence, 842 residues long: Envelope glycoprotein gp160 (842 aa).

The signal sequence occupies residues 1-23 (MGMKSGWLLFYLLVSLIKVIGSE). The Extracellular segment spans residues 24–663 (QHWVTVYYGV…ITKWLWYIKI (640 aa)). C45 and C65 are oxidised to a cystine. N-linked (GlcNAc...) asparagine; by host glycosylation is found at N79, N123, N131, N134, N149, N153, N181, N190, N225, N229, N234, N255, N267, N278, N284, N290, N320, N331, and N345. Disulfide bonds link C110–C198, C117–C189, C122–C150, C211–C240, and C221–C232. Residues 122-149 (CNDSYGEERNNTNMTTREPDIGYKQMKN) form a V1 region. The interval 150–189 (CSFNATTELTDKKKQVYSLFYVEDVVPINAYNKTYRLINC) is V2. The tract at residues 285-318 (CTRPGNNTGGQVQIGPAMTFYNIEKIVGDIRQAY) is V3. A disulfide bridge links C285 with C319. The CD4-binding loop stretch occupies residues 353–363 (RNEGDLEVTHL). Disulfide bonds link C367–C423 and C374–C396. Positions 374 to 396 (CNTSKLFNEELLNETGEPITLPC) are V4. Residues N375, N386, N422, and N426 are each glycosylated (N-linked (GlcNAc...) asparagine; by host). V5 stretches follow at residues 439–448 (DTKETIVYPS) and 441–448 (KETIVYPS). The interval 489–510 (AAFGLGALFLGFLGAAGSTMGA) is fusion peptide. The tract at residues 552–570 (KQLQAKVLAIERYLRDQQI) is immunosuppression. C576 and C582 are joined by a disulfide. N-linked (GlcNAc...) asparagine; by host glycosylation is found at N589, N594, N595, N604, and N616. Positions 612 to 646 (EKVRNYSGVIFGLIEQAQEQQNTNEKSLLELDQWD) form a coiled coil. The interval 641–662 (ELDQWDSLWSWFGITKWLWYIK) is MPER; binding to GalCer. The chain crosses the membrane as a helical span at residues 664-684 (AIMIVAGIVGIRIISIVITII). At 685–842 (ARVRQGYSPL…IRQGLERALI (158 aa)) the chain is on the cytoplasmic side. The YXXL motif; contains endocytosis signal motif lies at 691–694 (YSPL).

This sequence belongs to the HIV-1 env protein family. The mature envelope protein (Env) consists of a homotrimer of non-covalently associated gp120-gp41 heterodimers. The resulting complex protrudes from the virus surface as a spike. There seems to be as few as 10 spikes on the average virion. Interacts with host CD4, CCR5 and CXCR4. Gp120 also interacts with the C-type lectins CD209/DC-SIGN and CLEC4M/DC-SIGNR (collectively referred to as DC-SIGN(R)). Gp120 and gp41 interact with GalCer. Gp120 interacts with host ITGA4/ITGB7 complex; on CD4+ T-cells, this interaction results in rapid activation of integrin ITGAL/LFA-1, which facilitates efficient cell-to-cell spreading of HIV-1. Gp120 interacts with cell-associated heparan sulfate; this interaction increases virus infectivity on permissive cells and may be involved in infection of CD4- cells. In terms of assembly, the mature envelope protein (Env) consists of a homotrimer of non-covalently associated gp120-gp41 heterodimers. The resulting complex protrudes from the virus surface as a spike. There seems to be as few as 10 spikes on the average virion. In terms of processing, highly glycosylated by host. The high number of glycan on the protein is reffered to as 'glycan shield' because it contributes to hide protein sequence from adaptive immune system. Post-translationally, palmitoylation of the transmembrane protein and of Env polyprotein (prior to its proteolytic cleavage) is essential for their association with host cell membrane lipid rafts. Palmitoylation is therefore required for envelope trafficking to classical lipid rafts, but not for viral replication. Specific enzymatic cleavages in vivo yield mature proteins. Envelope glycoproteins are synthesized as an inactive precursor that is heavily N-glycosylated and processed likely by host cell furin in the Golgi to yield the mature SU and TM proteins. The cleavage site between SU and TM requires the minimal sequence [KR]-X-[KR]-R. About 2 of the 9 disulfide bonds of gp41 are reduced by P4HB/PDI, following binding to CD4 receptor.

It is found in the virion membrane. It localises to the host cell membrane. The protein resides in the host endosome membrane. Its function is as follows. Oligomerizes in the host endoplasmic reticulum into predominantly trimers. In a second time, gp160 transits in the host Golgi, where glycosylation is completed. The precursor is then proteolytically cleaved in the trans-Golgi and thereby activated by cellular furin or furin-like proteases to produce gp120 and gp41. Attaches the virus to the host lymphoid cell by binding to the primary receptor CD4. This interaction induces a structural rearrangement creating a high affinity binding site for a chemokine coreceptor like CXCR4 and/or CCR5. Acts as a ligand for CD209/DC-SIGN and CLEC4M/DC-SIGNR, which are respectively found on dendritic cells (DCs), and on endothelial cells of liver sinusoids and lymph node sinuses. These interactions allow capture of viral particles at mucosal surfaces by these cells and subsequent transmission to permissive cells. HIV subverts the migration properties of dendritic cells to gain access to CD4+ T-cells in lymph nodes. Virus transmission to permissive T-cells occurs either in trans (without DCs infection, through viral capture and transmission), or in cis (following DCs productive infection, through the usual CD4-gp120 interaction), thereby inducing a robust infection. In trans infection, bound virions remain infectious over days and it is proposed that they are not degraded, but protected in non-lysosomal acidic organelles within the DCs close to the cell membrane thus contributing to the viral infectious potential during DCs' migration from the periphery to the lymphoid tissues. On arrival at lymphoid tissues, intact virions recycle back to DCs' cell surface allowing virus transmission to CD4+ T-cells. In terms of biological role, acts as a class I viral fusion protein. Under the current model, the protein has at least 3 conformational states: pre-fusion native state, pre-hairpin intermediate state, and post-fusion hairpin state. During fusion of viral and target intracellular membranes, the coiled coil regions (heptad repeats) assume a trimer-of-hairpins structure, positioning the fusion peptide in close proximity to the C-terminal region of the ectodomain. The formation of this structure appears to drive apposition and subsequent fusion of viral and target cell membranes. Complete fusion occurs in host cell endosomes and is dynamin-dependent, however some lipid transfer might occur at the plasma membrane. The virus undergoes clathrin-dependent internalization long before endosomal fusion, thus minimizing the surface exposure of conserved viral epitopes during fusion and reducing the efficacy of inhibitors targeting these epitopes. Membranes fusion leads to delivery of the nucleocapsid into the cytoplasm. The chain is Envelope glycoprotein gp160 from Human immunodeficiency virus type 1 group N (isolate YBF30) (HIV-1).